A 429-amino-acid chain; its full sequence is Adenylosuccinate synthetase (429 aa).

Residues 12-18 and 40-42 each bind GTP; these read GDEGKGK and GHT. Catalysis depends on D13, which acts as the Proton acceptor. The Mg(2+) site is built by D13 and G40. IMP-binding positions include 13–16, 38–41, T128, R142, Q223, T238, and R302; these read DEGK and NAGH. H41 functions as the Proton donor in the catalytic mechanism. Substrate is bound at residue 298–304; it reads ATTGRKR. GTP contacts are provided by residues R304, 330–332, and 412–414; these read KLD and GTG.

It belongs to the adenylosuccinate synthetase family. As to quaternary structure, homodimer. Requires Mg(2+) as cofactor.

Its subcellular location is the cytoplasm. The enzyme catalyses IMP + L-aspartate + GTP = N(6)-(1,2-dicarboxyethyl)-AMP + GDP + phosphate + 2 H(+). It participates in purine metabolism; AMP biosynthesis via de novo pathway; AMP from IMP: step 1/2. Functionally, plays an important role in the de novo pathway of purine nucleotide biosynthesis. Catalyzes the first committed step in the biosynthesis of AMP from IMP. The chain is Adenylosuccinate synthetase from Tropheryma whipplei (strain TW08/27) (Whipple's bacillus).